A 311-amino-acid chain; its full sequence is Dermonecrotic toxin (311 aa).

Positions 1–21 (MYVHLALILGCWTVVLQGAET) are cleaved as a signal peptide. Positions 22 to 26 (DVGER) are excised as a propeptide. His-38 is a catalytic residue. Mg(2+)-binding residues include Glu-58 and Asp-60. His-73 acts as the Nucleophile in catalysis. A disulfide bridge connects residues Cys-77 and Cys-83. Residue Asp-117 participates in Mg(2+) binding.

The protein belongs to the arthropod phospholipase D family. Class I subfamily. Mg(2+) is required as a cofactor. Expressed by the venom gland.

It is found in the secreted. It catalyses the reaction an N-(acyl)-sphingosylphosphocholine = an N-(acyl)-sphingosyl-1,3-cyclic phosphate + choline. It carries out the reaction an N-(acyl)-sphingosylphosphoethanolamine = an N-(acyl)-sphingosyl-1,3-cyclic phosphate + ethanolamine. The enzyme catalyses a 1-acyl-sn-glycero-3-phosphocholine = a 1-acyl-sn-glycero-2,3-cyclic phosphate + choline. The catalysed reaction is a 1-acyl-sn-glycero-3-phosphoethanolamine = a 1-acyl-sn-glycero-2,3-cyclic phosphate + ethanolamine. With respect to regulation, catalytic activity and hemolysis are inhibited by divalent ion chelators (1,10-phenanthroline, EDTA, and EGTA). Its function is as follows. Dermonecrotic toxins cleave the phosphodiester linkage between the phosphate and headgroup of certain phospholipids (sphingolipid and lysolipid substrates), forming an alcohol (often choline) and a cyclic phosphate. This toxin acts on sphingomyelin (SM). It may also act on ceramide phosphoethanolamine (CPE), lysophosphatidylcholine (LPC) and lysophosphatidylethanolamine (LPE), but not on lysophosphatidylserine (LPS), and lysophosphatidylglycerol (LPG). It acts by transphosphatidylation, releasing exclusively cyclic phosphate products as second products. Shows complement-dependent hemolysis. Also induces dermonecrosis, vascular permeability, edema, inflammatory response, and platelet aggregation. The protein is Dermonecrotic toxin of Loxosceles laeta (South American recluse spider).